The primary structure comprises 148 residues: Large ribosomal subunit protein uL15 (148 aa).

The segment covering 1–11 (MSEPIKLHDLR) has biased composition (basic and acidic residues). The tract at residues 1–52 (MSEPIKLHDLRPAAGSNKAKTRVGRGEASKGKTAGRGTKGTKARKQVSAAFE) is disordered.

It belongs to the universal ribosomal protein uL15 family. As to quaternary structure, part of the 50S ribosomal subunit.

In terms of biological role, binds to the 23S rRNA. The sequence is that of Large ribosomal subunit protein uL15 from Corynebacterium glutamicum (strain R).